Consider the following 103-residue polypeptide: Phosphoribosyl-ATP pyrophosphatase (103 aa).

It belongs to the PRA-PH family.

It is found in the cytoplasm. The catalysed reaction is 1-(5-phospho-beta-D-ribosyl)-ATP + H2O = 1-(5-phospho-beta-D-ribosyl)-5'-AMP + diphosphate + H(+). Its pathway is amino-acid biosynthesis; L-histidine biosynthesis; L-histidine from 5-phospho-alpha-D-ribose 1-diphosphate: step 2/9. The chain is Phosphoribosyl-ATP pyrophosphatase from Cereibacter sphaeroides (strain ATCC 17029 / ATH 2.4.9) (Rhodobacter sphaeroides).